The following is a 748-amino-acid chain: tRNA endonuclease ANKZF1 (748 aa).

The segment at 96 to 120 (LFCSACDQIFQNHQEQREHYKLDWH) adopts a C2H2-type zinc-finger fold. The tract at residues 135-185 (SASDFEQQSSTGDLSSISGSDDTDSSSEEDLLPLDEGRAESEKPNRPPGFY) is disordered. Positions 143-154 (SSTGDLSSISGS) are enriched in low complexity. A compositionally biased stretch (acidic residues) spans 155-167 (DDTDSSSEEDLLP). Basic and acidic residues predominate over residues 169 to 179 (DEGRAESEKPN). The 144-residue stretch at 227-370 (GPRYYVVLMA…QRVLHKLTTL (144 aa)) folds into the VLRF1 domain. Gln270 is a catalytic residue. Ser282 and Ser385 each carry phosphoserine. Over residues 383–408 (FHSPETHWKPVREERKKDTEKEKTKV) the composition is skewed to basic and acidic residues. Disordered stretches follow at residues 383-438 (FHSP…SEVE) and 460-497 (RRRRRKKKERSQEQQCGAHGPLPQQPQDEPFSQPTQEV). A compositionally biased stretch (acidic residues) spans 429 to 438 (SQEEDGSEVE). Positions 484–497 (QPQDEPFSQPTQEV) are enriched in polar residues. Residues 515–545 (ELWDTLLAACRAGEVEVLKLQLATGLVDPGV) form an ANK 1 repeat. Residue Ser555 is modified to Phosphoserine. An ANK 2 repeat occupies 556 to 585 (GGFTLLHAAAAAGRGLVVRLLLEAGADPTV). The tract at residues 621–677 (KARVPGPLTQEMEARQATRKKEQKAARRQREQQQRKQREQEEQEQEEQRRFAALSDR) is disordered. A coiled-coil region spans residues 628–681 (LTQEMEARQATRKKEQKAARRQREQQQRKQREQEEQEQEEQRRFAALSDREKRA). Thr629 carries the phosphothreonine modification. The segment covering 632–677 (MEARQATRKKEQKAARRQREQQQRKQREQEEQEQEEQRRFAALSDR) has biased composition (basic and acidic residues). The interval 654–666 (QRKQREQEEQEQE) is VCP/p97-interacting motif (VIM). Ser702 carries the phosphoserine modification.

It belongs to the ANKZF1/VMS1 family. As to quaternary structure, interacts (via VIM motif) with VCP.

The protein resides in the cytoplasm. Its function is as follows. Endonuclease that cleaves polypeptidyl-tRNAs downstream of the ribosome-associated quality control (RQC) pathway to release incompletely synthesized polypeptides for degradation. The RQC pathway disassembles aberrantly stalled translation complexes to recycle or degrade the constituent parts. ANKZF1 acts downstream disassembly of stalled ribosomes and specifically cleaves off the terminal 3'-CCA nucleotides universal to all tRNAs from polypeptidyl-tRNAs, releasing (1) ubiquitinated polypeptides from 60S ribosomal subunit for degradation and (2) cleaved tRNAs. ANKZF1-cleaved tRNAs are then repaired and recycled by ELAC1 and TRNT1. Also plays a role in the cellular response to hydrogen peroxide and in the maintenance of mitochondrial integrity under conditions of cellular stress. The chain is tRNA endonuclease ANKZF1 from Mus musculus (Mouse).